The sequence spans 1464 residues: DNA polymerase III PolC-type (1464 aa).

Residues tyrosine 426–leucine 582 enclose the Exonuclease domain.

It belongs to the DNA polymerase type-C family. PolC subfamily.

Its subcellular location is the cytoplasm. The enzyme catalyses DNA(n) + a 2'-deoxyribonucleoside 5'-triphosphate = DNA(n+1) + diphosphate. Its function is as follows. Required for replicative DNA synthesis. This DNA polymerase also exhibits 3' to 5' exonuclease activity. The protein is DNA polymerase III PolC-type of Streptococcus thermophilus (strain ATCC BAA-250 / LMG 18311).